The primary structure comprises 331 residues: MKKIKILLDTMGYENTLEHVIKAAKDFYYQHEDDLEIILVGNEQLIKPLLDNDWRLFPIVHTEVSIEQNDTILSARKKQNSSMHLALRYLKDKQANGMLTAGNSAVFVYNAYATIGLLEHIKKPAFMPFVPTIDGGVTNLLDVGASIDLDGRDLFNFAIMANTIAKMRTPNPRVGVLNIGTEDHKGLPYHQEANELLKTSNLNYVGFVEPKTILEREVDVLVADGFSGNIALKTMEGVGKTISNFLKNEYKKPKNLFAALLSKPIFKKMKKAFDYKEHAGAFVLGLDGILVKTHGSADYQQFMSALKILYETIKADVLNEIKKDLNNYYGQ.

It belongs to the PlsX family. Homodimer. Probably interacts with PlsY.

It localises to the cytoplasm. The enzyme catalyses a fatty acyl-[ACP] + phosphate = an acyl phosphate + holo-[ACP]. Its pathway is lipid metabolism; phospholipid metabolism. In terms of biological role, catalyzes the reversible formation of acyl-phosphate (acyl-PO(4)) from acyl-[acyl-carrier-protein] (acyl-ACP). This enzyme utilizes acyl-ACP as fatty acyl donor, but not acyl-CoA. This is Phosphate acyltransferase from Ureaplasma urealyticum serovar 10 (strain ATCC 33699 / Western).